The following is a 301-amino-acid chain: MRIAILSQGPELYSTKRLVEAAQLRGHEVHVINPLECYMNINMRQSSIHIGGRELPTFDAVIPRIGASITFYGSAVLRQFEMMGVYALNDSVGISRSRDKLRSMQLMSRRGIGLPITGFANKPSDIPDLIDMVGGAPLVIKLLEGTQGIGVVLAETRKAAESVIEAFMGLKANIMVQEYIKEANGADIRCFVLGDKVIAAMKRQAMPGEFRSNLHRGGTASLVKLTPEERSVAIRAAKTMGLNVAGVDLLRSNHGPVIMEVNSSPGLEGIEGATTKDVAGAIIEFVEKNVTKVKKVTQAQG.

The region spanning 104 to 287 is the ATP-grasp domain; sequence MQLMSRRGIG…VAGAIIEFVE (184 aa). Residues Lys-141, 178 to 179, Asp-187, and 211 to 213 each bind ATP; these read EY and RSN. Positions 248, 260, and 262 each coordinate Mg(2+). Residues Asp-248, Glu-260, and Asn-262 each contribute to the Mn(2+) site.

Belongs to the RimK family. Mg(2+) serves as cofactor. It depends on Mn(2+) as a cofactor.

In Shewanella putrefaciens (strain CN-32 / ATCC BAA-453), this protein is Probable alpha-L-glutamate ligase 1.